Consider the following 327-residue polypeptide: Zinc transport protein ZntB (327 aa).

Residues 1 to 273 (MEAIKGSDVN…ARRTYTMSLM (273 aa)) are Cytoplasmic-facing. The chain crosses the membrane as a helical span at residues 274 to 294 (AMVFLPSTFLTGLFGVNLGGI). The Periplasmic portion of the chain corresponds to 295-300 (PGGGWR). Residues 301-321 (FGFSLFCILLVVLIGGVTLWL) form a helical membrane-spanning segment. Over 322–327 (HRSKWL) the chain is Cytoplasmic.

It belongs to the CorA metal ion transporter (MIT) (TC 1.A.35) family.

The protein localises to the cell inner membrane. The enzyme catalyses Zn(2+)(out) + H(+)(out) = Zn(2+)(in) + H(+)(in). Zinc transporter. Acts as a Zn(2+):proton symporter, which likely mediates zinc ion uptake. This is Zinc transport protein ZntB from Salmonella enteritidis PT4 (strain P125109).